Consider the following 145-residue polypeptide: UPF0179 protein MmarC7_0952 (145 aa).

It belongs to the UPF0179 family.

The protein is UPF0179 protein MmarC7_0952 of Methanococcus maripaludis (strain C7 / ATCC BAA-1331).